We begin with the raw amino-acid sequence, 129 residues long: Allergen Bra j 1-E (129 aa).

The disordered stretch occupies residues 28–47 (KQAMQSGSGPQPQGPQQRPP). The span at 32–47 (QSGSGPQPQGPQQRPP) shows a compositional bias: low complexity.

The protein belongs to the 2S seed storage albumins family. In terms of assembly, the mature protein consists of a small and a large chain linked by two disulfide bonds.

This is a 2S seed storage protein. This Brassica juncea (Indian mustard) protein is Allergen Bra j 1-E.